Here is a 139-residue protein sequence, read N- to C-terminus: Probable transcription termination protein NusA (139 aa).

The 43-residue stretch at 97–139 (STVAYAEVDRADTGVAIGRDGETIETARRLAERQFDIDDIELA) folds into the KH domain.

It belongs to the NusA family.

It is found in the cytoplasm. Participates in transcription termination. The polypeptide is Probable transcription termination protein NusA (Halococcus morrhuae (Micrococcus morrhuae)).